The chain runs to 520 residues: Amine oxidase [flavin-containing] B (520 aa).

S2 is subject to N-acetylserine. The Cytoplasmic portion of the chain corresponds to 2–489; that stretch reads SSKCDVVVVG…TFLERHLPSV (488 aa). K52 is subject to N6-acetyllysine. Position 397 is an S-8alpha-FAD cysteine (C397). The chain crosses the membrane as a helical; Anchor for type IV membrane protein span at residues 490-516; sequence PGLLRLIGLTAIFSATALGYLAHKRGL. Over 517–520 the chain is Mitochondrial intermembrane; sequence LVRV.

The protein belongs to the flavin monoamine oxidase family. In terms of assembly, monomer, homo- or heterodimer (containing two subunits of similar size). Each subunit contains a covalently bound flavin. Enzymatically active as monomer. FAD is required as a cofactor.

Its subcellular location is the mitochondrion outer membrane. It catalyses the reaction a secondary aliphatic amine + O2 + H2O = a primary amine + an aldehyde + H2O2. It carries out the reaction (R)-adrenaline + O2 + H2O = (R)-3,4-dihydroxymandelaldehyde + methylamine + H2O2. The catalysed reaction is a primary methyl amine + O2 + H2O = an aldehyde + H2O2 + NH4(+). The enzyme catalyses benzylamine + O2 + H2O = benzaldehyde + H2O2 + NH4(+). It catalyses the reaction dopamine + O2 + H2O = 3,4-dihydroxyphenylacetaldehyde + H2O2 + NH4(+). It carries out the reaction tyramine + O2 + H2O = (4-hydroxyphenyl)acetaldehyde + H2O2 + NH4(+). The catalysed reaction is (R)-noradrenaline + O2 + H2O = (R)-3,4-dihydroxymandelaldehyde + H2O2 + NH4(+). The enzyme catalyses 2-phenylethylamine + O2 + H2O = 2-phenylacetaldehyde + H2O2 + NH4(+). It catalyses the reaction N-acetylputrescine + O2 + H2O = 4-acetamidobutanal + H2O2 + NH4(+). Its function is as follows. Catalyzes the oxidative deamination of primary and some secondary amines such as neurotransmitters, and exogenous amines including the tertiary amine, neurotoxin 1-methyl-4-phenyl-1,2,3,6-tetrahydropyridine (MPTP), with concomitant reduction of oxygen to hydrogen peroxide and participates in the metabolism of neuroactive and vasoactive amines in the central nervous system and peripheral tissues. Preferentially degrades benzylamine and phenylethylamine. The sequence is that of Amine oxidase [flavin-containing] B from Sus scrofa (Pig).